The primary structure comprises 189 residues: MEVILMERVAKLGQMGDTVRVKDGYARNFLLPGGKALRATAANKARFDTQRAQLEARNLELKSEASAVAEKLDGQAFVIIRQAGETGHLYGSVSPRDIAEVVTAGGFSANRNQIVLASPIKSIGLHEVPVHLHPEVVATITVNVARSPAEAERQAAGEEVNVVEEATMDDLGLEVGAALADAGGSLGDR.

This sequence belongs to the bacterial ribosomal protein bL9 family.

In terms of biological role, binds to the 23S rRNA. In Methylocella silvestris (strain DSM 15510 / CIP 108128 / LMG 27833 / NCIMB 13906 / BL2), this protein is Large ribosomal subunit protein bL9.